A 207-amino-acid polypeptide reads, in one-letter code: Outer-membrane lipoprotein carrier protein (207 aa).

An N-terminal signal peptide occupies residues 1 to 21; it reads MRAIRMLLVSALALGTVTAYA.

This sequence belongs to the LolA family. As to quaternary structure, monomer.

The protein resides in the periplasm. Functionally, participates in the translocation of lipoproteins from the inner membrane to the outer membrane. Only forms a complex with a lipoprotein if the residue after the N-terminal Cys is not an aspartate (The Asp acts as a targeting signal to indicate that the lipoprotein should stay in the inner membrane). This is Outer-membrane lipoprotein carrier protein from Pseudomonas putida (strain GB-1).